A 149-amino-acid polypeptide reads, in one-letter code: Transcriptional repressor NrdR (149 aa).

Residues 3 to 34 fold into a zinc finger; that stretch reads CPFCSHQETQVVETRVSEDGDFIRRRRQCGAC. One can recognise an ATP-cone domain in the interval 49–139; that stretch reads PTVVKKDGRR…VYRSFEDIDE (91 aa).

The protein belongs to the NrdR family. Zn(2+) is required as a cofactor.

Negatively regulates transcription of bacterial ribonucleotide reductase nrd genes and operons by binding to NrdR-boxes. This chain is Transcriptional repressor NrdR, found in Acidovorax sp. (strain JS42).